Reading from the N-terminus, the 1474-residue chain is Alpha-2-macroglobulin (1474 aa).

Positions 1-23 (MGKNKLLHPSLVLLLLVLLPTDA) are cleaved as a signal peptide. A disulfide bond links Cys48 and Cys86. An N-linked (GlcNAc...) (complex) asparagine glycan is attached at Asn55. N-linked (GlcNAc...) asparagine glycans are attached at residues Asn70 and Asn247. 2 disulfide bridges follow: Cys251/Cys299 and Cys269/Cys287. Asn396 and Asn410 each carry an N-linked (GlcNAc...) asparagine glycan. Cystine bridges form between Cys470/Cys563, Cys595/Cys771, Cys642/Cys689, Cys821/Cys849, Cys847/Cys883, Cys921/Cys1321, Cys1079/Cys1127, and Cys1352/Cys1467. The tract at residues 690-728 (PQLQQYEMHGPEGLRVGFYESDVMGRGHARLVHVEEPHT) is bait region. Residues Gln693 and Gln694 each participate in an isoglutamyl lysine isopeptide (Gln-Lys) (interchain with K-? in other proteins) cross-link. Inhibitory stretches follow at residues 704-709 (RVGFYE), 719-723 (RLVHV), and 730-735 (TVRKYF). Asn869 carries an N-linked (GlcNAc...) asparagine glycan. Residues 972–975 (CGEQ) constitute a cross-link (isoglutamyl cysteine thioester (Cys-Gln)). An N-linked (GlcNAc...) asparagine glycan is attached at Asn991. Residue Asn1424 is glycosylated (N-linked (GlcNAc...) (complex) asparagine).

This sequence belongs to the protease inhibitor I39 (alpha-2-macroglobulin) family. In terms of assembly, homotetramer; disulfide-linked. As to expression, secreted in plasma.

The protein resides in the secreted. Functionally, is able to inhibit all four classes of proteinases by a unique 'trapping' mechanism. This protein has a peptide stretch, called the 'bait region' which contains specific cleavage sites for different proteinases. When a proteinase cleaves the bait region, a conformational change is induced in the protein which traps the proteinase. The entrapped enzyme remains active against low molecular weight substrates (activity against high molecular weight substrates is greatly reduced). Following cleavage in the bait region, a thioester bond is hydrolyzed and mediates the covalent binding of the protein to the proteinase. This chain is Alpha-2-macroglobulin (A2M), found in Homo sapiens (Human).